An 83-amino-acid chain; its full sequence is Retinal cone rhodopsin-sensitive cGMP 3',5'-cyclic phosphodiesterase subunit gamma (83 aa).

The interval 1 to 54 (MSDSPSLSPPAPSQGPTTPRKGPPKFKQRQTRQFKSKPPKKGVKGFGDDIPGME) is disordered. Basic residues predominate over residues 22–43 (GPPKFKQRQTRQFKSKPPKKGV).

The protein belongs to the rod/cone cGMP-PDE gamma subunit family. Tetramer composed of two catalytic chains (alpha and beta), and two inhibitory chains (gamma).

The enzyme catalyses 3',5'-cyclic GMP + H2O = GMP + H(+). In terms of biological role, participates in processes of transmission and amplification of the visual signal. cGMP-PDEs are the effector molecules in G-protein-mediated phototransduction in vertebrate rods and cones. This Mus musculus (Mouse) protein is Retinal cone rhodopsin-sensitive cGMP 3',5'-cyclic phosphodiesterase subunit gamma (Pde6h).